A 920-amino-acid polypeptide reads, in one-letter code: Probable helicase HelY (920 aa).

In terms of domain architecture, Helicase ATP-binding spans C26–T184. Position 39–46 (A39–T46) interacts with ATP. The DEVH box motif lies at D132–H135. In terms of domain architecture, Helicase C-terminal spans E265 to H469.

The protein belongs to the helicase family. SKI2 subfamily.

In Mycobacterium leprae (strain TN), this protein is Probable helicase HelY (helY).